We begin with the raw amino-acid sequence, 390 residues long: Chalcone synthase (390 aa).

Residue cysteine 164 is part of the active site.

It belongs to the thiolase-like superfamily. Chalcone/stilbene synthases family.

It catalyses the reaction (E)-4-coumaroyl-CoA + 3 malonyl-CoA + 3 H(+) = 2',4,4',6'-tetrahydroxychalcone + 3 CO2 + 4 CoA. It participates in secondary metabolite biosynthesis; flavonoid biosynthesis. Its function is as follows. The primary product of this enzyme is 4,2',4',6'-tetrahydroxychalcone (also termed naringenin-chalcone or chalcone) which can under specific conditions spontaneously isomerize into naringenin. The polypeptide is Chalcone synthase (CHS) (Onobrychis viciifolia (Common sainfoin)).